The sequence spans 136 residues: Large ribosomal subunit protein eL27 (136 aa).

The KOW domain occupies 5-40 (MKPGKVVMVLAGRYAGRKAVIVKNIDDGTADRPYSH).

This sequence belongs to the eukaryotic ribosomal protein eL27 family. Component of the large ribosomal subunit.

The protein resides in the cytoplasm. It is found in the cytosol. The protein localises to the rough endoplasmic reticulum. Component of the large ribosomal subunit. The chain is Large ribosomal subunit protein eL27 (rpl27) from Hippocampus comes (Tiger tail seahorse).